The primary structure comprises 89 residues: Small ribosomal subunit protein uS19 (89 aa).

It belongs to the universal ribosomal protein uS19 family.

In terms of biological role, protein S19 forms a complex with S13 that binds strongly to the 16S ribosomal RNA. In Phocaeicola vulgatus (strain ATCC 8482 / DSM 1447 / JCM 5826 / CCUG 4940 / NBRC 14291 / NCTC 11154) (Bacteroides vulgatus), this protein is Small ribosomal subunit protein uS19.